The chain runs to 963 residues: Integrator complex subunit 4 (963 aa).

Lys-26 carries the post-translational modification N6-acetyllysine. 8 HEAT repeats span residues 66–105, 145–183, 190–228, 229–263, 277–313, 369–405, 406–444, and 446–484; these read AESV…TAGF, QAIQ…LEKS, GLAA…RGLK, LHQT…SQLY, IRLV…EQVS, NLIE…AQSS, PSFA…NITL, and EDQL…GIHL. A Glycyl lysine isopeptide (Lys-Gly) (interchain with G-Cter in SUMO1); alternate cross-link involves residue Lys-791. Residue Lys-791 forms a Glycyl lysine isopeptide (Lys-Gly) (interchain with G-Cter in SUMO2); alternate linkage.

This sequence belongs to the Integrator subunit 4 family. Component of the Integrator complex, composed of core subunits INTS1, INTS2, INTS3, INTS4, INTS5, INTS6, INTS7, INTS8, INTS9/RC74, INTS10, INTS11/CPSF3L, INTS12, INTS13, INTS14 and INTS15. The core complex associates with protein phosphatase 2A subunits PPP2CA and PPP2R1A, to form the Integrator-PP2A (INTAC) complex. INTS4 is part of the RNA endonuclease subcomplex, composed of INTS4, INTS9, INTS11 and inositol hexakisphosphate (InsP6). Interacts with BRAT1; interaction is required for the assembly of the RNA endonuclease subcomplex.

It localises to the nucleus. The protein resides in the cytoplasm. Component of the integrator complex, a multiprotein complex that terminates RNA polymerase II (Pol II) transcription in the promoter-proximal region of genes. The integrator complex provides a quality checkpoint during transcription elongation by driving premature transcription termination of transcripts that are unfavorably configured for transcriptional elongation: the complex terminates transcription by (1) catalyzing dephosphorylation of the C-terminal domain (CTD) of Pol II subunit POLR2A/RPB1 and SUPT5H/SPT5, (2) degrading the exiting nascent RNA transcript via endonuclease activity and (3) promoting the release of Pol II from bound DNA. The integrator complex is also involved in terminating the synthesis of non-coding Pol II transcripts, such as enhancer RNAs (eRNAs), small nuclear RNAs (snRNAs), telomerase RNAs and long non-coding RNAs (lncRNAs). Within the integrator complex, INTS4 acts as an scaffold that links INTS9 and INTS11. Mediates recruitment of cytoplasmic dynein to the nuclear envelope, probably as component of the integrator complex. This Homo sapiens (Human) protein is Integrator complex subunit 4.